Here is a 601-residue protein sequence, read N- to C-terminus: Proteasome-associated ATPase (601 aa).

Residues 1-15 show a composition bias toward gly residues; that stretch reads MSGPRSGSGSGGSTG. The segment at 1-31 is disordered; it reads MSGPRSGSGSGGSTGRPGDAESRRSAYEKEA. The span at 18–31 shows a compositional bias: basic and acidic residues; sequence GDAESRRSAYEKEA. Residues 18 to 106 adopt a coiled-coil conformation; sequence GDAESRRSAY…LKEEVDRLAQ (89 aa). 289–294 is an ATP binding site; sequence GCGKTL. A docks into pockets in the proteasome alpha-ring region spans residues 600-601; it reads YL.

The protein belongs to the AAA ATPase family. As to quaternary structure, homohexamer. Assembles into a hexameric ring structure that caps the 20S proteasome core. Strongly interacts with the prokaryotic ubiquitin-like protein Pup through a hydrophobic interface; the interacting region of ARC lies in its N-terminal coiled-coil domain. There is one Pup binding site per ARC hexamer ring. Upon ATP-binding, the C-terminus of ARC interacts with the alpha-rings of the proteasome core, possibly by binding to the intersubunit pockets.

Its pathway is protein degradation; proteasomal Pup-dependent pathway. Its function is as follows. ATPase which is responsible for recognizing, binding, unfolding and translocation of pupylated proteins into the bacterial 20S proteasome core particle. May be essential for opening the gate of the 20S proteasome via an interaction with its C-terminus, thereby allowing substrate entry and access to the site of proteolysis. Thus, the C-termini of the proteasomal ATPase may function like a 'key in a lock' to induce gate opening and therefore regulate proteolysis. In Frankia alni (strain DSM 45986 / CECT 9034 / ACN14a), this protein is Proteasome-associated ATPase.